We begin with the raw amino-acid sequence, 576 residues long: MKLKKPSLPSSLLCAVPPCLSQIRLLIPRRVRVSSSTFANAKLVTLRNHTVNLHIYYCSMAGTDNRRSRHDDESPKNPNKKKKGNRNPEKSLLINLHSCSKRKDLSAALALYDAAITSSDIRLNQQHFQSLLYLCSAFISDPSLQTVAIDRGFQIFDRMVSSGISPNESSVTAVARLAAAKGDGDYAFKLVKDLVAVGGVSVPRLRTYAPALLCFCDTLEAEKGYEVEDHMDASGIVLEEAEISALLKVSAATGRENKVYRYLQKLRECVGCVSEETSKAIEEWFYGVKASEVSDNGIGSDIELLRAAVLKNGGGWHGLGWVGEGKWIVKKGNVSSAGKCLSCDEHLACVDTNEVETEDFVNSLVTLAMERKAKMNSCEPMADFSEFQEWLEKHGDYEAILDGANIGLYQQNFADGGFSLPQLEAVVKELYNKSGSKKQPLILLHKKRVNALLENPNHRNLVEEWINNNVLYATPPGSNDDWYWLYAAAKLKCLLVTNDEMRDHIFELLSNSFFQKWKERHQVRFTFVKGCLKLEMPPPFSVVIQESEKGSWHVPITSQDKEESLRSWMCITRQSS.

Over residues 65–75 (NRRSRHDDESP) the composition is skewed to basic and acidic residues. The interval 65–88 (NRRSRHDDESPKNPNKKKKGNRNP) is disordered. PPR repeat units lie at residues 88–123 (PEKS…DIRL), 129–166 (QSLL…GISP), 167–201 (NESS…GGVS), and 204–238 (RLRT…GIVL). The PRORP domain maps to 335–570 (SSAGKCLSCD…KEESLRSWMC (236 aa)). C340 and C343 together coordinate Zn(2+). Mn(2+) contacts are provided by D402, D480, D481, and D499. Zn(2+) is bound by residues H553 and C570.

This sequence belongs to the PPR family. P subfamily. Requires Mg(2+) as cofactor. It depends on Mn(2+) as a cofactor.

The protein resides in the nucleus. The catalysed reaction is Endonucleolytic cleavage of RNA, removing 5'-extranucleotides from tRNA precursor.. In terms of biological role, endonuclease RNase P responsible for the 5' maturation of tRNA precursors. Also involved in the maturation of mRNA and small nucleolar RNA (snoRNA). The polypeptide is Proteinaceous RNase P 3 (PRORP3) (Arabidopsis thaliana (Mouse-ear cress)).